Reading from the N-terminus, the 454-residue chain is MEKDTSIPEDLKLAVLEKIKPTEAERKILTAVQEELAAEVKAAAEKLCVADIFVKMVGSAARGTWLSGTHDIDVFISFPEETSREELERRGMEIAREVAKKAEHAEDRHAEHPYLNIVFKGFDVDLVPCFRVESACQLKSAVDRTPFHNEFVKTHIKGREDDVLLMKQFMRGGGVYGSELKTQGFSGYLTELLIIHYGSFENTVKAACLWKPGKKIDIMQHSEMEHTEPLVMVDPTDPKRNVAAALSLDKFCMFMDHCREFMKSPGLNFFFPPPLSPLEDREFLEKLESRKSSQLAIVFKTPDIVDDVLYPQLYKMEQAAAALLHEYDFSVIKTGVWSGKPETVVMLELISGTLPNVKKRIGPPVWVREHAEKFKAKYEGAENVFGGYIEGGKYVFEIQRKYPTAKGLLENQLLNCSLGKQVKSSVSAGFEVIEDAEICRLKDPDFRVFLRKWV.

ATP contacts are provided by serine 59 and arginine 62. Serine 59 and arginine 62 together coordinate CTP. Residues aspartate 71, aspartate 73, and aspartate 125 each coordinate Mg(2+). Residues histidine 148, lysine 167, and tyrosine 176 each contribute to the ATP site. Residues histidine 148, lysine 167, and tyrosine 176 each contribute to the CTP site.

The protein belongs to the tRNA nucleotidyltransferase/poly(A) polymerase family. Archaeal CCA-adding enzyme subfamily. Homodimer. Mg(2+) is required as a cofactor.

The enzyme catalyses a tRNA precursor + 2 CTP + ATP = a tRNA with a 3' CCA end + 3 diphosphate. The catalysed reaction is a tRNA with a 3' CCA end + 2 CTP + ATP = a tRNA with a 3' CCACCA end + 3 diphosphate. In terms of biological role, catalyzes the addition and repair of the essential 3'-terminal CCA sequence in tRNAs without using a nucleic acid template. Adds these three nucleotides in the order of C, C, and A to the tRNA nucleotide-73, using CTP and ATP as substrates and producing inorganic pyrophosphate. tRNA 3'-terminal CCA addition is required both for tRNA processing and repair. Also involved in tRNA surveillance by mediating tandem CCA addition to generate a CCACCA at the 3' terminus of unstable tRNAs. While stable tRNAs receive only 3'-terminal CCA, unstable tRNAs are marked with CCACCA and rapidly degraded. In Methanosarcina acetivorans (strain ATCC 35395 / DSM 2834 / JCM 12185 / C2A), this protein is CCA-adding enzyme.